Reading from the N-terminus, the 3843-residue chain is NBPF family member NBPF19 (3843 aa).

Residues 70–130 (MLRNERQFKE…RSLNEHLQAL (61 aa)) are a coiled coil. Olduvai domains follow at residues 165 to 257 (ENDN…HIIP), 258 to 329 (ENES…VDIG), 330 to 421 (RHRW…PSCP), 424 to 479 (SREL…LDVD), 480 to 572 (RIKK…RSKK), 573 to 665 (ERRR…PSCP), 668 to 723 (SREL…LDVD), 724 to 816 (RIKK…RSKK), 817 to 909 (ERRR…PSCP), 912 to 967 (SREL…LDVD), 968 to 1060 (RIKK…RSKK), 1061 to 1153 (ERRR…PSCP), 1156 to 1211 (SREL…LDVD), 1212 to 1304 (RIKK…RSKK), 1305 to 1397 (ERRR…PSCP), 1400 to 1455 (SREL…LDVD), 1456 to 1548 (RIKK…RSKK), 1549 to 1641 (ERRR…PSCP), 1644 to 1699 (SREL…LDVD), 1700 to 1792 (RIKK…RSKK), 1793 to 1885 (ERRR…PSCP), 1888 to 1943 (SREL…LDVD), 1944 to 2036 (RIKK…RSKK), 2037 to 2129 (ERRR…PSCP), 2132 to 2187 (SREL…LDVD), 2188 to 2280 (RIKK…RSKK), 2281 to 2373 (ERRR…PSCP), 2376 to 2431 (SREL…LDVD), 2432 to 2524 (RIKK…RSKK), 2525 to 2617 (ERRR…PSCP), 2620 to 2675 (SREL…LDVD), 2676 to 2768 (RIKK…RSKK), 2769 to 2861 (ERRR…PSCP), 2864 to 2919 (SREL…LDVD), 2920 to 3012 (RIKK…RSKK), 3013 to 3105 (ERRR…PSCP), 3108 to 3163 (SREL…LDVD), 3164 to 3256 (RIKK…RSKK), 3257 to 3349 (ERRR…PSCP), 3352 to 3407 (SREL…LDVD), 3408 to 3500 (RIKK…RSKK), 3501 to 3593 (ERRR…PSCP), 3596 to 3651 (SREL…LDVD), 3652 to 3744 (RIKK…RSKK), and 3745 to 3843 (ERRR…IFPQ). 2 disordered regions span residues 180–203 (EKVQ…PEDS) and 249–295 (WEDA…EGYS). 2 stretches are compositionally biased toward acidic residues: residues 259-268 (NESDDEEEEE) and 279-291 (ESEE…ESWD). The disordered stretch occupies residues 559 to 597 (KGKGKKRRGRRSKKERRRGRKEGEEDQNPPCPRLSRELL). Over residues 560-578 (GKGKKRRGRRSKKERRRGR) the composition is skewed to basic residues. The disordered stretch occupies residues 803-841 (KGKGKKRRGRRSKKERRRGRKEGEEDQNPPCPRLSRELL). The span at 804 to 822 (GKGKKRRGRRSKKERRRGR) shows a compositional bias: basic residues. The disordered stretch occupies residues 1047–1085 (KGKGKKRRGRRSKKERRRGRKEGEEDQNPPCPRLSRELL). Over residues 1048 to 1066 (GKGKKRRGRRSKKERRRGR) the composition is skewed to basic residues. Positions 1291–1329 (KGKGKKRRGRRSKKERRRGRKEGEEDQNPPCPRLSRELL) are disordered. The span at 1292–1310 (GKGKKRRGRRSKKERRRGR) shows a compositional bias: basic residues. The tract at residues 1535-1573 (KGKGKKRRGRRSKKERRRGRKEGEEDQNPPCPRLSRELL) is disordered. The segment covering 1536–1554 (GKGKKRRGRRSKKERRRGR) has biased composition (basic residues). The segment at 1779–1817 (KGKGKKRRGRRSKKERRRGRKEGEEDQNPPCPRLSRELL) is disordered. The span at 1780–1798 (GKGKKRRGRRSKKERRRGR) shows a compositional bias: basic residues. The disordered stretch occupies residues 2023 to 2061 (KGKGKKRRGRRSKKERRRGRKEGEEDQNPPCPRLSRELL). The segment covering 2024–2042 (GKGKKRRGRRSKKERRRGR) has biased composition (basic residues). Residues 2267–2305 (KGKGKKRRGRRSKKERRRGRKEGEEDQNPPCPRLSRELL) are disordered. Residues 2268 to 2286 (GKGKKRRGRRSKKERRRGR) show a composition bias toward basic residues. Positions 2511–2549 (KGKGKKRRGRRSKKERRRGRKEGEEDQNPPCPRLSRELL) are disordered. Residues 2512 to 2530 (GKGKKRRGRRSKKERRRGR) are compositionally biased toward basic residues. Residues 2755 to 2793 (KGKGKKRRGRRSKKERRRGRKEGEEDQNPPCPRLSRELL) are disordered. Residues 2756–2774 (GKGKKRRGRRSKKERRRGR) are compositionally biased toward basic residues. The interval 2999-3037 (KGKGKKRRGRRSKKERRRGRKEGEEDQNPPCPRLSRELL) is disordered. A compositionally biased stretch (basic residues) spans 3000–3018 (GKGKKRRGRRSKKERRRGR). Residues 3243-3281 (KGKGKKRRGRRSKKERRRGRKEGEEDQNPPCPRLSRELL) form a disordered region. The segment covering 3244–3262 (GKGKKRRGRRSKKERRRGR) has biased composition (basic residues). A disordered region spans residues 3487–3525 (KGKGKKRRGRRSKKERRRGRKEGEEDQNPPCPRLSRELL). Basic residues predominate over residues 3488-3506 (GKGKKRRGRRSKKERRRGR). The disordered stretch occupies residues 3731 to 3764 (KGKGKKRRGRRSKKERRRGRKEGEEDQNPPCPRL). The segment covering 3732–3750 (GKGKKRRGRRSKKERRRGR) has biased composition (basic residues).

Belongs to the NBPF family.

It is found in the cytoplasm. The sequence is that of NBPF family member NBPF19 from Homo sapiens (Human).